Reading from the N-terminus, the 1486-residue chain is Histone-lysine N-methyltransferase set1 (1486 aa).

6 disordered regions span residues 1–64, 83–148, 201–231, 309–360, 409–429, and 532–665; these read MENE…SPKD, FSSE…NNNN, TTDNTTLMSPNNATTTNGSSSNISTTTTTTT, GGMN…IFTQ, IDDIYDPSNPTEPISPHQDHY, and DRER…NSDV. Residues 9-52 show a composition bias toward low complexity; sequence NSLNNKSNVNNSNNDINNSKSNNNNTNTNYNNNHNNTTTTTTIN. Residues 53-64 show a composition bias toward basic and acidic residues; that stretch reads KTEEKQNDSPKD. Residues 115–148 show a composition bias toward low complexity; sequence ITSPTTSPTTSTSTSTSTSTSTSTSTIINNNNNN. A compositionally biased stretch (polar residues) spans 201-210; the sequence is TTDNTTLMSP. Positions 211 to 231 are enriched in low complexity; it reads NNATTTNGSSSNISTTTTTTT. Residues 320–343 are compositionally biased toward pro residues; it reads QPPPPSPPPPPPPTLPPPPPPTLP. The span at 347-359 shows a compositional bias: polar residues; the sequence is SLEQQSTKQQIFT. Residues 359-400 are a coiled coil; the sequence is TQQQQQQQQQQQQQQQQQQQQQQQQQQQQQQQQQIPKINQQH. Residues 532–542 show a composition bias toward basic and acidic residues; sequence DRERDRDRYDR. Low complexity-rich tracts occupy residues 552-584 and 617-663; these read STTTSASTSSTTSSTDKNSNNTTSTSVSATTST and NNSS…NNNS. The stretch at 717-744 forms a coiled coil; that stretch reads KLNVDNKKTNTINEELQKQKQLENDSNN. 2 stretches are compositionally biased toward low complexity: residues 812 to 829 and 843 to 860; these read NTTNTTTSNINNTSNNTT and PTSRDSPRGGRSSSTTTK. 3 disordered regions span residues 812-1103, 1130-1255, and 1278-1327; these read NTTN…IQSN, SEEG…DNIN, and KLFK…SSRF. A compositionally biased stretch (acidic residues) spans 906-931; it reads DSEDDGNNNNDDDDDDDDDEDDDFDQ. Composition is skewed to basic residues over residues 945–954 and 965–979; these read NIKSIIKKKP and HHHNHHHNHHHHHHH. Acidic residues-rich tracts occupy residues 997–1006 and 1022–1043; these read LDSDNENQDE and SDDDNEFDSLDTDQDLYDTEEN. A compositionally biased stretch (basic residues) spans 1048-1064; the sequence is KSNKRPRKSKFNGKSKK. A compositionally biased stretch (low complexity) spans 1065–1077; it reads PTTTTSTTTTATK. Positions 1139–1148 are enriched in polar residues; sequence QEILSTPTRT. Residues 1177–1255 are a coiled coil; that stretch reads QQKQEKQEKH…NLNTSIDNIN (79 aa). The segment covering 1179 to 1199 has biased composition (basic and acidic residues); sequence KQEKQEKHEHKLKNKELKQKN. The segment covering 1213–1223 has biased composition (low complexity); it reads ENLNGDNNNNN. Residues 1224–1240 are compositionally biased toward basic and acidic residues; it reads DKSENENENENENKNEN. Low complexity-rich tracts occupy residues 1243 to 1255 and 1292 to 1316; these read DNNNLNTSIDNIN and GAASSASSGSNSSSSSTAESFETGG. The SET domain occupies 1347–1464; the sequence is KRIKFERSDI…IGEEITYDYK (118 aa). Position 1463 (tyrosine 1463) interacts with S-adenosyl-L-methionine. The region spanning 1470–1486 is the Post-SET domain; the sequence is VKIPCLCKSPKCRQTLN.

The protein belongs to the class V-like SAM-binding methyltransferase superfamily. In terms of assembly, component of the Set1C/COMPASS complex.

It localises to the nucleus. The protein localises to the chromosome. It carries out the reaction L-lysyl(4)-[histone H3] + 3 S-adenosyl-L-methionine = N(6),N(6),N(6)-trimethyl-L-lysyl(4)-[histone H3] + 3 S-adenosyl-L-homocysteine + 3 H(+). It catalyses the reaction N(6)-methyl-L-lysyl(4)-[histone H3] + S-adenosyl-L-methionine = N(6),N(6)-dimethyl-L-lysyl(4)-[histone H3] + S-adenosyl-L-homocysteine + H(+). The enzyme catalyses N(6),N(6)-dimethyl-L-lysyl(4)-[histone H3] + S-adenosyl-L-methionine = N(6),N(6),N(6)-trimethyl-L-lysyl(4)-[histone H3] + S-adenosyl-L-homocysteine + H(+). In terms of biological role, catalytic component of the COMPASS (Set1C) complex that specifically mono-, di- and trimethylates histone H3 to form H3K4me1/2/3. Binds RNAs which might negatively affect its histone methyltransferase activity. COMPASS recognizes ubiquitinated H2B on one face of the nucleosome which stimulates the methylation of H3 on the opposing face. May act to regulate chromatin-mediated events. This chain is Histone-lysine N-methyltransferase set1 (set1), found in Dictyostelium discoideum (Social amoeba).